Reading from the N-terminus, the 156-residue chain is Small ribosomal subunit protein uS7 (156 aa).

This sequence belongs to the universal ribosomal protein uS7 family. In terms of assembly, part of the 30S ribosomal subunit. Contacts proteins S9 and S11.

Its function is as follows. One of the primary rRNA binding proteins, it binds directly to 16S rRNA where it nucleates assembly of the head domain of the 30S subunit. Is located at the subunit interface close to the decoding center, probably blocks exit of the E-site tRNA. The protein is Small ribosomal subunit protein uS7 of Limosilactobacillus fermentum (strain NBRC 3956 / LMG 18251) (Lactobacillus fermentum).